A 319-amino-acid chain; its full sequence is Cytochrome f (319 aa).

The first 34 residues, 1–34 (MQNRNTYDLKKKMTRLISVLVMIHIITRTSISNA), serve as a signal peptide directing secretion. Residues Y35, C55, C58, and H59 each contribute to the heme site. Residues 285–304 (VKGLLLFLASVILAQIFLVL) traverse the membrane as a helical segment.

The protein belongs to the cytochrome f family. In terms of assembly, the 4 large subunits of the cytochrome b6-f complex are cytochrome b6, subunit IV (17 kDa polypeptide, petD), cytochrome f and the Rieske protein, while the 4 small subunits are PetG, PetL, PetM and PetN. The complex functions as a dimer. Heme is required as a cofactor.

The protein resides in the plastid. It localises to the chloroplast thylakoid membrane. In terms of biological role, component of the cytochrome b6-f complex, which mediates electron transfer between photosystem II (PSII) and photosystem I (PSI), cyclic electron flow around PSI, and state transitions. This Picea abies (Norway spruce) protein is Cytochrome f (petA).